The primary structure comprises 330 residues: Ferredoxin--NADP reductase 2 (330 aa).

Residues E37, Q45, Y50, V90, F124, D286, and T327 each contribute to the FAD site.

This sequence belongs to the ferredoxin--NADP reductase type 2 family. In terms of assembly, homodimer. FAD is required as a cofactor.

The enzyme catalyses 2 reduced [2Fe-2S]-[ferredoxin] + NADP(+) + H(+) = 2 oxidized [2Fe-2S]-[ferredoxin] + NADPH. The polypeptide is Ferredoxin--NADP reductase 2 (Shouchella clausii (strain KSM-K16) (Alkalihalobacillus clausii)).